A 234-amino-acid chain; its full sequence is MRLYQLSSQSLQFPDPNHALDDPNGLLAVGGDLSVARLKAAYRQGIFPWFSPGEPILWWSPNPRAVLFPDELHVSRSMKKFLKRHTFHATLNQAFDDVIHACAHEHHDGTWITSEIISAYRQLHLAGKAHSVEVWQDDKLVGGLYGVEQGRLFCGESMFSRTDNASKYALLAFQQHFIHHGGHLIDCQVLNAHTASLGVSEIPRDRFLQQLSQWQDLAVDDGCWLPQQLAEPTL.

It belongs to the L/F-transferase family.

The protein resides in the cytoplasm. It carries out the reaction N-terminal L-lysyl-[protein] + L-leucyl-tRNA(Leu) = N-terminal L-leucyl-L-lysyl-[protein] + tRNA(Leu) + H(+). The enzyme catalyses N-terminal L-arginyl-[protein] + L-leucyl-tRNA(Leu) = N-terminal L-leucyl-L-arginyl-[protein] + tRNA(Leu) + H(+). It catalyses the reaction L-phenylalanyl-tRNA(Phe) + an N-terminal L-alpha-aminoacyl-[protein] = an N-terminal L-phenylalanyl-L-alpha-aminoacyl-[protein] + tRNA(Phe). Its function is as follows. Functions in the N-end rule pathway of protein degradation where it conjugates Leu, Phe and, less efficiently, Met from aminoacyl-tRNAs to the N-termini of proteins containing an N-terminal arginine or lysine. The chain is Leucyl/phenylalanyl-tRNA--protein transferase from Pectobacterium carotovorum subsp. carotovorum (strain PC1).